A 446-amino-acid polypeptide reads, in one-letter code: Exodeoxyribonuclease 7 large subunit (446 aa).

This sequence belongs to the XseA family. As to quaternary structure, heterooligomer composed of large and small subunits.

The protein localises to the cytoplasm. It catalyses the reaction Exonucleolytic cleavage in either 5'- to 3'- or 3'- to 5'-direction to yield nucleoside 5'-phosphates.. In terms of biological role, bidirectionally degrades single-stranded DNA into large acid-insoluble oligonucleotides, which are then degraded further into small acid-soluble oligonucleotides. The sequence is that of Exodeoxyribonuclease 7 large subunit from Streptococcus pyogenes serotype M49 (strain NZ131).